Here is an 834-residue protein sequence, read N- to C-terminus: Glycerol-3-phosphate acyltransferase (834 aa).

The short motif at 309 to 314 (CHRSHI) is the HXXXXD motif element.

The protein belongs to the GPAT/DAPAT family.

The protein resides in the cell inner membrane. It carries out the reaction sn-glycerol 3-phosphate + an acyl-CoA = a 1-acyl-sn-glycero-3-phosphate + CoA. The protein operates within phospholipid metabolism; CDP-diacylglycerol biosynthesis; CDP-diacylglycerol from sn-glycerol 3-phosphate: step 1/3. The polypeptide is Glycerol-3-phosphate acyltransferase (Pseudomonas fluorescens (strain ATCC BAA-477 / NRRL B-23932 / Pf-5)).